Here is a 436-residue protein sequence, read N- to C-terminus: Probable sodium/metabolite cotransporter BASS4, chloroplastic (436 aa).

A chloroplast-targeting transit peptide spans 1 to 47; the sequence is MAIASTLASTQNPFLCLRQPPSPGNRSVVFRRCQDPCGRRWISRSIR. Helical transmembrane passes span 109–129, 131–151, 157–177, 195–215, 225–245, 257–277, 297–314, 328–348, and 403–423; these read FLPLALVSGVGLGFANPTLGC, ADKYSFTKISTCGIFIISGLT, IGAAVKGWPLGLFGLISILLL, LVTGLGIFCCMPTTLSSGVAL, LALAVTVASNLLGILTIPFWV, FPTDQLFRSLIVTLLIPLIIG, LFSKINAICLSLVPWIQV, VFLAAVGIGILLHLSLLAFNA, and PCVAAHLNQIMIDSVLVNLWL.

This sequence belongs to the bile acid:sodium symporter (BASS) (TC 2.A.28) family.

It localises to the membrane. It is found in the plastid. The protein resides in the chloroplast envelope. Its function is as follows. May function as sodium-coupled metabolite transporter across the chloroplast envelope. This is Probable sodium/metabolite cotransporter BASS4, chloroplastic (BASS4) from Arabidopsis thaliana (Mouse-ear cress).